Here is a 419-residue protein sequence, read N- to C-terminus: L-rhamnose isomerase (419 aa).

Residues His-262, Asp-294, and Asp-296 each coordinate Mn(2+).

The protein belongs to the rhamnose isomerase family. Homotetramer. Mn(2+) is required as a cofactor.

It is found in the cytoplasm. The enzyme catalyses L-rhamnopyranose = L-rhamnulose. The protein operates within carbohydrate degradation; L-rhamnose degradation; glycerone phosphate from L-rhamnose: step 1/3. Functionally, catalyzes the interconversion of L-rhamnose and L-rhamnulose. The chain is L-rhamnose isomerase from Escherichia coli O139:H28 (strain E24377A / ETEC).